A 614-amino-acid chain; its full sequence is Selenocysteine-specific elongation factor (614 aa).

Residues 1–173 enclose the tr-type G domain; the sequence is MIIATAGHVD…LPEREHASQH (173 aa). The interval 7–14 is G1; it reads GHVDHGKT. Residue 7-14 coordinates GTP; the sequence is GHVDHGKT. Residues 35-39 form a G2 region; the sequence is GMTID. The tract at residues 57-60 is G3; it reads DVPG. Residues 57 to 61 and 112 to 115 contribute to the GTP site; these read DVPGH and TKAD. A G4 region spans residues 112–115; it reads TKAD. The tract at residues 147–149 is G5; the sequence is AAT.

This sequence belongs to the TRAFAC class translation factor GTPase superfamily. Classic translation factor GTPase family. SelB subfamily.

The protein localises to the cytoplasm. Translation factor necessary for the incorporation of selenocysteine into proteins. It probably replaces EF-Tu for the insertion of selenocysteine directed by the UGA codon. SelB binds GTP and GDP. This chain is Selenocysteine-specific elongation factor (selB), found in Escherichia coli (strain K12).